The primary structure comprises 97 residues: Peptide YY-A (97 aa).

An N-terminal signal peptide occupies residues 1-28 (MAVMLKPWTVVATVLICVLLCLGTFVDA). A Tyrosine amide modification is found at Tyr64. Residues 68–97 (STSEDVMAELLFGDDTEHKQRSRYDDSFMW) constitute a propeptide, C-terminal extension.

This sequence belongs to the NPY family. As to expression, mainly expressed in brainstem neurons, and in the telencephalon. Also expressed in intestinal endocrine cells.

The protein resides in the secreted. The sequence is that of Peptide YY-A (pyya) from Danio rerio (Zebrafish).